We begin with the raw amino-acid sequence, 298 residues long: Flavin-dependent thymidylate synthase (298 aa).

In terms of domain architecture, ThyX spans 41-251 (GFVRLVDYMG…PLTYAAFVEY (211 aa)). FAD contacts are provided by residues Thr87, 110 to 112 (RHR), and Glu118. DUMP contacts are provided by residues 107–110 (QWVR), 118–122 (EYSAR), and Arg190. Residues 110 to 120 (RHRTANVNEYS) carry the ThyX motif motif. Residues 206-208 (DLH) and His212 contribute to the FAD site. Arg217 lines the dUMP pocket. Catalysis depends on Arg217, which acts as the Involved in ionization of N3 of dUMP, leading to its activation.

It belongs to the thymidylate synthase ThyX family. Homotetramer. It depends on FAD as a cofactor.

It catalyses the reaction dUMP + (6R)-5,10-methylene-5,6,7,8-tetrahydrofolate + NADPH + H(+) = dTMP + (6S)-5,6,7,8-tetrahydrofolate + NADP(+). It participates in pyrimidine metabolism; dTTP biosynthesis. Functionally, catalyzes the reductive methylation of 2'-deoxyuridine-5'-monophosphate (dUMP) to 2'-deoxythymidine-5'-monophosphate (dTMP) while utilizing 5,10-methylenetetrahydrofolate (mTHF) as the methyl donor, and NADPH and FADH(2) as the reductant. The sequence is that of Flavin-dependent thymidylate synthase from Ehrlichia ruminantium (strain Welgevonden).